Consider the following 220-residue polypeptide: Thioredoxin domain-containing protein (220 aa).

Positions M1 to A19 are cleaved as a signal peptide. In terms of domain architecture, Thioredoxin spans T20–N141. Topologically, residues T20–T181 are lumenal. An intrachain disulfide couples C64 to C67. A helical membrane pass occupies residues I182 to F202. The Cytoplasmic segment spans residues T203 to K220. The short motif at K217–K220 is the Di-lysine motif element.

Belongs to the protein disulfide isomerase family.

It localises to the endoplasmic reticulum membrane. The chain is Thioredoxin domain-containing protein from Theileria parva (East coast fever infection agent).